Here is a 354-residue protein sequence, read N- to C-terminus: Anthranilate phosphoribosyltransferase (354 aa).

Residues glycine 94, 97–98, threonine 102, 104–107, 122–130, and serine 134 contribute to the 5-phospho-alpha-D-ribose 1-diphosphate site; these read GD, NIST, and KHGNRAASS. Glycine 94 is a binding site for anthranilate. Serine 106 provides a ligand contact to Mg(2+). Asparagine 125 is an anthranilate binding site. Arginine 180 lines the anthranilate pocket. Mg(2+) is bound by residues aspartate 238 and glutamate 239.

Belongs to the anthranilate phosphoribosyltransferase family. As to quaternary structure, homodimer. It depends on Mg(2+) as a cofactor.

It catalyses the reaction N-(5-phospho-beta-D-ribosyl)anthranilate + diphosphate = 5-phospho-alpha-D-ribose 1-diphosphate + anthranilate. It functions in the pathway amino-acid biosynthesis; L-tryptophan biosynthesis; L-tryptophan from chorismate: step 2/5. In terms of biological role, catalyzes the transfer of the phosphoribosyl group of 5-phosphorylribose-1-pyrophosphate (PRPP) to anthranilate to yield N-(5'-phosphoribosyl)-anthranilate (PRA). This is Anthranilate phosphoribosyltransferase from Streptomyces avermitilis (strain ATCC 31267 / DSM 46492 / JCM 5070 / NBRC 14893 / NCIMB 12804 / NRRL 8165 / MA-4680).